The primary structure comprises 66 residues: Large ribosomal subunit protein bL35 (66 aa).

2 stretches are compositionally biased toward basic residues: residues 1-16 (MPKF…RFKR) and 23-45 (KRSH…RQLR). Residues 1 to 66 (MPKFKTHRAS…RIRQMLSGLK (66 aa)) are disordered.

Belongs to the bacterial ribosomal protein bL35 family.

In Latilactobacillus sakei subsp. sakei (strain 23K) (Lactobacillus sakei subsp. sakei), this protein is Large ribosomal subunit protein bL35.